We begin with the raw amino-acid sequence, 319 residues long: tRNA uridine(34) hydroxylase (319 aa).

Residues 127-221 (KQEDTVIIDA…YGKDPEVQGE (95 aa)) enclose the Rhodanese domain. Catalysis depends on Cys181, which acts as the Cysteine persulfide intermediate.

It belongs to the TrhO family.

It carries out the reaction uridine(34) in tRNA + AH2 + O2 = 5-hydroxyuridine(34) in tRNA + A + H2O. In terms of biological role, catalyzes oxygen-dependent 5-hydroxyuridine (ho5U) modification at position 34 in tRNAs. This Bacillus cereus (strain G9842) protein is tRNA uridine(34) hydroxylase.